Reading from the N-terminus, the 867-residue chain is Coiled-coil domain-containing protein 80 (867 aa).

A signal peptide spans 1 to 18 (MRARYMLGFGVLCLLTWA). Disordered regions lie at residues 83 to 121 (RKVL…SSAG) and 282 to 539 (DSQV…GTLA). Residues 95–104 (GTRNPIQQDD) are compositionally biased toward polar residues. A compositionally biased stretch (basic and acidic residues) spans 288 to 297 (PTERRKEIRK). Residues 301 to 370 (RPTTTTTPAP…PRTTRANTTP (70 aa)) show a composition bias toward low complexity. Positions 401–412 (ARYRDNHTSKKE) are enriched in basic and acidic residues. Residues 426–435 (KPTKVRPTKK) are compositionally biased toward basic residues. Positions 436-451 (KNGDKDISNAYEEKYD) are enriched in basic and acidic residues. Residues 471–483 (KRGKGKTDKKKKK) show a composition bias toward basic residues. Composition is skewed to basic and acidic residues over residues 484–504 (DKTD…DGKG) and 514–523 (KILEKEDYQK).

Belongs to the CCDC80 family. As to quaternary structure, binds to various extracellular matrix proteins.

It is found in the secreted. Its subcellular location is the extracellular space. It localises to the extracellular matrix. Its function is as follows. Promotes cell adhesion and matrix assembly. This chain is Coiled-coil domain-containing protein 80 (ccdc80), found in Danio rerio (Zebrafish).